We begin with the raw amino-acid sequence, 554 residues long: 3-(3-hydroxy-phenyl)propionate/3-hydroxycinnamic acid hydroxylase (554 aa).

Residues 17 to 46 (QVAIAGAGPVGLMMANYLGQMGIDVLVVEK) and 285 to 295 (FRIDRVLLAGD) each bind FAD.

Belongs to the PheA/TfdB FAD monooxygenase family. FAD serves as cofactor.

The enzyme catalyses 3-(3-hydroxyphenyl)propanoate + NADH + O2 + H(+) = 3-(2,3-dihydroxyphenyl)propanoate + NAD(+) + H2O. It catalyses the reaction (2E)-3-(3-hydroxyphenyl)prop-2-enoate + NADH + O2 + H(+) = (2E)-3-(2,3-dihydroxyphenyl)prop-2-enoate + NAD(+) + H2O. Its pathway is aromatic compound metabolism; 3-phenylpropanoate degradation. Its function is as follows. Catalyzes the insertion of one atom of molecular oxygen into position 2 of the phenyl ring of 3-(3-hydroxyphenyl)propionate (3-HPP) and hydroxycinnamic acid (3HCI). This chain is 3-(3-hydroxy-phenyl)propionate/3-hydroxycinnamic acid hydroxylase, found in Shigella sonnei (strain Ss046).